The primary structure comprises 115 residues: Large ribosomal subunit protein bL19 (115 aa).

Belongs to the bacterial ribosomal protein bL19 family.

This protein is located at the 30S-50S ribosomal subunit interface and may play a role in the structure and function of the aminoacyl-tRNA binding site. This Kosmotoga olearia (strain ATCC BAA-1733 / DSM 21960 / TBF 19.5.1) protein is Large ribosomal subunit protein bL19.